We begin with the raw amino-acid sequence, 284 residues long: Proton-translocating ferredoxin:NAD(+) oxidoreductase complex subunit B (284 aa).

Residues 1–26 (MNTVIMILVVMTIIGLIFGLVLAYVN) form a hydrophobic region. Residues 32–92 (EVNPLVDLVE…AEQVAKLTGK (61 aa)) enclose the 4Fe-4S domain. Residues Cys-49, Cys-52, Cys-57, Cys-75, Cys-138, Cys-142, Cys-148, Cys-152, Cys-172, Cys-175, Cys-178, Cys-182, Cys-217, Cys-220, Cys-223, Cys-227, Cys-246, Cys-249, Cys-254, and Cys-258 each contribute to the [4Fe-4S] cluster site. 4 consecutive 4Fe-4S ferredoxin-type domains span residues 133–162 (GGPKACKYGCLGFGTCVKSCPFGAMAMGSN), 163–192 (GLPIIDTDICTGCGTCVSACPKQVLGFRPV), 206–237 (GGAVRKACSVGCLGCGLCAKNCPNDAIKVENN), and 239–269 (AVVDQSICASCSEATCLAKCPTGAIKAIVSG).

It belongs to the 4Fe4S bacterial-type ferredoxin family. RnfB subfamily. As to quaternary structure, the complex is composed of six subunits: RnfA, RnfB, RnfC, RnfD, RnfE and RnfG. Requires [4Fe-4S] cluster as cofactor.

It is found in the cell membrane. Part of a membrane-bound complex that couples electron transfer with translocation of ions across the membrane. Couples electron transfer from reduced ferredoxin to NAD(+) with translocation of H(+) out of the cell. Essential for energy conservation during autotrophic growth. Contributes to ATP synthesis during heterotrophic growth. The chain is Proton-translocating ferredoxin:NAD(+) oxidoreductase complex subunit B from Clostridium ljungdahlii (strain ATCC 55383 / DSM 13528 / PETC).